The primary structure comprises 361 residues: Molybdenum import ATP-binding protein ModC 1 (361 aa).

The ABC transporter domain maps to 1–237 (MPADGIRARF…LDLPTAFHED (237 aa)). Residue 35–42 (GHSGSGKT) coordinates ATP. The Mop domain maps to 296 to 361 (DSSITNVLPA…AQIKAVALLG (66 aa)).

It belongs to the ABC transporter superfamily. Molybdate importer (TC 3.A.1.8) family. As to quaternary structure, the complex is composed of two ATP-binding proteins (ModC), two transmembrane proteins (ModB) and a solute-binding protein (ModA).

It is found in the cell inner membrane. It carries out the reaction molybdate(out) + ATP + H2O = molybdate(in) + ADP + phosphate + H(+). In terms of biological role, part of the ABC transporter complex ModABC involved in molybdenum import. Responsible for energy coupling to the transport system. This chain is Molybdenum import ATP-binding protein ModC 1, found in Azotobacter vinelandii.